A 494-amino-acid polypeptide reads, in one-letter code: Inosine-5'-monophosphate dehydrogenase (494 aa).

CBS domains lie at 93–154 (IIRN…DEKI) and 158–217 (MTTN…CKDS). Residues Asp-251 and 301–303 (GIG) contribute to the NAD(+) site. K(+)-binding residues include Gly-303 and Gly-305. Ser-306 provides a ligand contact to IMP. Position 308 (Cys-308) interacts with K(+). Cys-308 acts as the Thioimidate intermediate in catalysis. IMP-binding positions include 341 to 343 (DGG), 364 to 365 (GS), and 388 to 392 (YRGMG). Arg-406 serves as the catalytic Proton acceptor. Residue Glu-421 participates in IMP binding. The K(+) site is built by Glu-475, Ser-476, and His-477.

It belongs to the IMPDH/GMPR family. Homotetramer. K(+) is required as a cofactor.

The enzyme catalyses IMP + NAD(+) + H2O = XMP + NADH + H(+). It participates in purine metabolism; XMP biosynthesis via de novo pathway; XMP from IMP: step 1/1. Mycophenolic acid (MPA) is a non-competitive inhibitor that prevents formation of the closed enzyme conformation by binding to the same site as the amobile flap. In contrast, mizoribine monophosphate (MZP) is a competitive inhibitor that induces the closed conformation. MPA is a potent inhibitor of mammalian IMPDHs but a poor inhibitor of the bacterial enzymes. MZP is a more potent inhibitor of bacterial IMPDH. Catalyzes the conversion of inosine 5'-phosphate (IMP) to xanthosine 5'-phosphate (XMP), the first committed and rate-limiting step in the de novo synthesis of guanine nucleotides, and therefore plays an important role in the regulation of cell growth. The polypeptide is Inosine-5'-monophosphate dehydrogenase (Chlorobaculum tepidum (strain ATCC 49652 / DSM 12025 / NBRC 103806 / TLS) (Chlorobium tepidum)).